The sequence spans 202 residues: Putative 3-methyladenine DNA glycosylase (202 aa).

The protein belongs to the DNA glycosylase MPG family.

In Staphylococcus aureus (strain MRSA252), this protein is Putative 3-methyladenine DNA glycosylase.